The primary structure comprises 167 residues: Crossover junction endodeoxyribonuclease RuvC (167 aa).

Active-site residues include aspartate 7, glutamate 67, and aspartate 140. Positions 7, 67, and 140 each coordinate Mg(2+).

This sequence belongs to the RuvC family. Homodimer which binds Holliday junction (HJ) DNA. The HJ becomes 2-fold symmetrical on binding to RuvC with unstacked arms; it has a different conformation from HJ DNA in complex with RuvA. In the full resolvosome a probable DNA-RuvA(4)-RuvB(12)-RuvC(2) complex forms which resolves the HJ. Mg(2+) is required as a cofactor.

The protein localises to the cytoplasm. The enzyme catalyses Endonucleolytic cleavage at a junction such as a reciprocal single-stranded crossover between two homologous DNA duplexes (Holliday junction).. Functionally, the RuvA-RuvB-RuvC complex processes Holliday junction (HJ) DNA during genetic recombination and DNA repair. Endonuclease that resolves HJ intermediates. Cleaves cruciform DNA by making single-stranded nicks across the HJ at symmetrical positions within the homologous arms, yielding a 5'-phosphate and a 3'-hydroxyl group; requires a central core of homology in the junction. The consensus cleavage sequence is 5'-(A/T)TT(C/G)-3'. Cleavage occurs on the 3'-side of the TT dinucleotide at the point of strand exchange. HJ branch migration catalyzed by RuvA-RuvB allows RuvC to scan DNA until it finds its consensus sequence, where it cleaves and resolves the cruciform DNA. This Moorella thermoacetica (strain ATCC 39073 / JCM 9320) protein is Crossover junction endodeoxyribonuclease RuvC.